A 49-amino-acid chain; its full sequence is Cytochrome b559 subunit beta (49 aa).

Residues 24-40 (WLAVHVLGVPTVFFLGA) traverse the membrane as a helical segment. Position 28 (His-28) interacts with heme.

Belongs to the PsbE/PsbF family. In terms of assembly, heterodimer of an alpha subunit and a beta subunit. PSII is composed of 1 copy each of membrane proteins PsbA, PsbB, PsbC, PsbD, PsbE, PsbF, PsbH, PsbI, PsbJ, PsbK, PsbL, PsbM, PsbT, PsbX, PsbY, Psb30/Ycf12, peripheral proteins PsbO, CyanoQ (PsbQ), PsbU, PsbV and a large number of cofactors. It forms dimeric complexes. The cofactor is heme b.

Its subcellular location is the cellular thylakoid membrane. In terms of biological role, this b-type cytochrome is tightly associated with the reaction center of photosystem II (PSII). PSII is a light-driven water:plastoquinone oxidoreductase that uses light energy to abstract electrons from H(2)O, generating O(2) and a proton gradient subsequently used for ATP formation. It consists of a core antenna complex that captures photons, and an electron transfer chain that converts photonic excitation into a charge separation. The chain is Cytochrome b559 subunit beta from Prochlorococcus marinus (strain MIT 9303).